The sequence spans 514 residues: MNYMIIYEIIAGILIVVAILIHFNIMKNKVAAIKSQTIYESNRLKEEAKKEAQSQKKEAILEAKEEVHKLRNDLERESRDRRMEIQRLEKRVLQREELLDKKNDVLEKRESSLDKKQQEIDKVQAKVEELYQKQREELERLSGLSSEEAKDILLEEVNKEIKHESAMMIKEVETKAKEEADKRAREIITSAIQRCAADHVAETTVHVVTLPNDEMKGRIIGREGRNIRTLETLTGVDLIIDDTPEAVILSGFDPIRREVARIALEKLIIDGRIHPARIEEMVEKAEKELENDIKEEGEQATFETGVHGLHIELIKLLGRLKYRTSYGQNVLKHSVEVAYLAGLMASEIGIDPTIAKRAGLLHDIGKAVDHEVEGPHAVIGAEIAKKYRESPVVVNAIGAHHGDLEFQSLEDVLVQAADAISAARPGARRETLEAYIKRLEKLEKIANTCEGVEKSYAIQAGRELRIMVKPEDIDDAGALEMARNIVKKIEEELEYPGQIKVNVIRETRAIEYAK.

The chain crosses the membrane as a helical span at residues 3-23 (YMIIYEIIAGILIVVAILIHF). The KH domain maps to 204 to 289 (TVHVVTLPND…EMVEKAEKEL (86 aa)). Residues 330–423 (VLKHSVEVAY…VQAADAISAA (94 aa)) form the HD domain.

The protein belongs to the RNase Y family.

Its subcellular location is the cell membrane. Endoribonuclease that initiates mRNA decay. The chain is Ribonuclease Y from Clostridium kluyveri (strain ATCC 8527 / DSM 555 / NBRC 12016 / NCIMB 10680 / K1).